The following is a 254-amino-acid chain: 3-oxo-5-alpha-steroid 4-dehydrogenase 2 (254 aa).

4 helical membrane-spanning segments follow: residues valine 8–glycine 28, proline 72–phenylalanine 92, phenylalanine 146–threonine 166, and leucine 206–methionine 226.

This sequence belongs to the steroid 5-alpha reductase family. In terms of tissue distribution, expressed in high levels in the prostate and many other androgen-sensitive tissues.

It is found in the microsome membrane. The protein localises to the endoplasmic reticulum membrane. The catalysed reaction is a 3-oxo-5alpha-steroid + NADP(+) = a 3-oxo-Delta(4)-steroid + NADPH + H(+). The enzyme catalyses 17beta-hydroxy-5alpha-androstan-3-one + NADP(+) = testosterone + NADPH + H(+). It catalyses the reaction 5alpha-pregnane-3,20-dione + NADP(+) = progesterone + NADPH + H(+). In terms of biological role, converts testosterone (T) into 5-alpha-dihydrotestosterone (DHT) and progesterone or corticosterone into their corresponding 5-alpha-3-oxosteroids. It plays a central role in sexual differentiation and androgen physiology. In Rattus norvegicus (Rat), this protein is 3-oxo-5-alpha-steroid 4-dehydrogenase 2 (Srd5a2).